The sequence spans 317 residues: Olfactory receptor 2T27 (317 aa).

Over 1-22 the chain is Extracellular; it reads MEQSNYSVYADFILLGLFSNAR. Asn5 is a glycosylation site (N-linked (GlcNAc...) asparagine). Residues 23-43 traverse the membrane as a helical segment; that stretch reads FPWLLFALILLVFLTSIASNV. The Cytoplasmic portion of the chain corresponds to 44–60; that stretch reads VKIILIHIDSRLHTPMY. A helical transmembrane segment spans residues 61-83; sequence FLLSQLSLRDILYISTIVPKMLV. Residues 84 to 97 are Extracellular-facing; the sequence is DQVMSQRAISFAGC. Cys97 and Cys189 are joined by a disulfide. Residues 98–118 traverse the membrane as a helical segment; that stretch reads TAQHFLYLTLAGAEFFLLGLM. Residues 119–139 lie on the Cytoplasmic side of the membrane; sequence SYDRYVAICNPLHYPVLMSRK. A helical membrane pass occupies residues 140-160; sequence ICWLIVAAAWLGGSIDGFLLT. The Extracellular portion of the chain corresponds to 161 to 197; the sequence is PVTMQFPFCASREINHFFCEVPALLKLSCTDTSAYET. The chain crosses the membrane as a helical span at residues 198 to 218; that stretch reads AMYVCCIMMLLIPFSVISGSY. Residues 219–244 lie on the Cytoplasmic side of the membrane; sequence TRILITVYRMSEAEGRGKAVATCSSH. The chain crosses the membrane as a helical span at residues 245 to 265; the sequence is MVVVSLFYGAAMYTYVLPHSY. The Extracellular segment spans residues 266 to 271; the sequence is HTPEQD. Residues 272 to 292 form a helical membrane-spanning segment; sequence KAVSAFYTILTPMLNPLIYSL. Residues 293 to 317 are Cytoplasmic-facing; that stretch reads RNKDVTGALQKVVGRCVSSGKVTTF.

Belongs to the G-protein coupled receptor 1 family.

Its subcellular location is the cell membrane. Functionally, odorant receptor. The polypeptide is Olfactory receptor 2T27 (OR2T27) (Homo sapiens (Human)).